Here is a 253-residue protein sequence, read N- to C-terminus: Imidazole glycerol phosphate synthase subunit HisF (253 aa).

Residues D11 and D130 contribute to the active site.

Belongs to the HisA/HisF family. As to quaternary structure, heterodimer of HisH and HisF.

The protein localises to the cytoplasm. The catalysed reaction is 5-[(5-phospho-1-deoxy-D-ribulos-1-ylimino)methylamino]-1-(5-phospho-beta-D-ribosyl)imidazole-4-carboxamide + L-glutamine = D-erythro-1-(imidazol-4-yl)glycerol 3-phosphate + 5-amino-1-(5-phospho-beta-D-ribosyl)imidazole-4-carboxamide + L-glutamate + H(+). Its pathway is amino-acid biosynthesis; L-histidine biosynthesis; L-histidine from 5-phospho-alpha-D-ribose 1-diphosphate: step 5/9. Its function is as follows. IGPS catalyzes the conversion of PRFAR and glutamine to IGP, AICAR and glutamate. The HisF subunit catalyzes the cyclization activity that produces IGP and AICAR from PRFAR using the ammonia provided by the HisH subunit. The protein is Imidazole glycerol phosphate synthase subunit HisF of Dehalococcoides mccartyi (strain ATCC BAA-2100 / JCM 16839 / KCTC 5957 / BAV1).